The chain runs to 664 residues: ATP synthase subunit alpha 2 (664 aa).

Gly180 to Thr187 contributes to the ATP binding site. The segment at Met525–Arg664 is disordered. The span at Ala543 to Ala588 shows a compositional bias: basic and acidic residues. A compositionally biased stretch (low complexity) spans Ala589 to Pro599. The segment covering Ala621–Ala639 has biased composition (basic and acidic residues).

The protein belongs to the ATPase alpha/beta chains family. As to quaternary structure, F-type ATPases have 2 components, CF(1) - the catalytic core - and CF(0) - the membrane proton channel. CF(1) has five subunits: alpha(3), beta(3), gamma(1), delta(1), epsilon(1). CF(0) has three main subunits: a(1), b(2) and c(9-12). The alpha and beta chains form an alternating ring which encloses part of the gamma chain. CF(1) is attached to CF(0) by a central stalk formed by the gamma and epsilon chains, while a peripheral stalk is formed by the delta and b chains.

The protein localises to the cell inner membrane. The catalysed reaction is ATP + H2O + 4 H(+)(in) = ADP + phosphate + 5 H(+)(out). Its function is as follows. Produces ATP from ADP in the presence of a proton gradient across the membrane. The alpha chain is a regulatory subunit. This is ATP synthase subunit alpha 2 from Burkholderia pseudomallei (strain 1710b).